Consider the following 106-residue polypeptide: Iron-sulfur cluster assembly protein CyaY (106 aa).

The protein belongs to the frataxin family.

Its function is as follows. Involved in iron-sulfur (Fe-S) cluster assembly. May act as a regulator of Fe-S biogenesis. The protein is Iron-sulfur cluster assembly protein CyaY of Klebsiella pneumoniae subsp. pneumoniae (strain ATCC 700721 / MGH 78578).